Reading from the N-terminus, the 184-residue chain is Ribosome maturation factor RimM (184 aa).

The region spanning 101 to 180 (DGEFFYCDLV…KITTNNAKTL (80 aa)) is the PRC barrel domain.

This sequence belongs to the RimM family. As to quaternary structure, binds ribosomal protein uS19.

Its subcellular location is the cytoplasm. Its function is as follows. An accessory protein needed during the final step in the assembly of 30S ribosomal subunit, possibly for assembly of the head region. Essential for efficient processing of 16S rRNA. May be needed both before and after RbfA during the maturation of 16S rRNA. It has affinity for free ribosomal 30S subunits but not for 70S ribosomes. This is Ribosome maturation factor RimM from Helicobacter pylori (strain Shi470).